The chain runs to 452 residues: UDP-N-acetylmuramoylalanine--D-glutamate ligase (452 aa).

119 to 125 is an ATP binding site; it reads GSNGKTT.

The protein belongs to the MurCDEF family.

It localises to the cytoplasm. It carries out the reaction UDP-N-acetyl-alpha-D-muramoyl-L-alanine + D-glutamate + ATP = UDP-N-acetyl-alpha-D-muramoyl-L-alanyl-D-glutamate + ADP + phosphate + H(+). It participates in cell wall biogenesis; peptidoglycan biosynthesis. Functionally, cell wall formation. Catalyzes the addition of glutamate to the nucleotide precursor UDP-N-acetylmuramoyl-L-alanine (UMA). This Streptococcus pyogenes serotype M4 (strain MGAS10750) protein is UDP-N-acetylmuramoylalanine--D-glutamate ligase.